The sequence spans 395 residues: uncharacterized protein (395 aa).

Positions 286 to 306 are enriched in low complexity; the sequence is SSNKSSESTMTSPLDSASSLH. A disordered region spans residues 286–395; sequence SSNKSSESTM…RNDDSGLESV (110 aa). The span at 350 to 362 shows a compositional bias: pro residues; the sequence is RPPPPSVHPPIFP. A compositionally biased stretch (polar residues) spans 364-385; sequence QTQLFHPPTYSTQRHVTSPNSS.

This is an uncharacterized protein from Caenorhabditis elegans.